A 352-amino-acid polypeptide reads, in one-letter code: Protein-glutamate methylesterase/protein-glutamine glutaminase 1 (352 aa).

One can recognise a Response regulatory domain in the interval 5–122 (KVLVVDDSAF…SLDVLSVKEE (118 aa)). Asp56 carries the post-translational modification 4-aspartylphosphate. One can recognise a CheB-type methylesterase domain in the interval 155 to 352 (PDQDRKLNKL…EITEEVLSML (198 aa)). Residues Ser170, His197, and Asp297 contribute to the active site.

It belongs to the CheB family. In terms of processing, phosphorylated by CheA. Phosphorylation of the N-terminal regulatory domain activates the methylesterase activity.

The protein localises to the cytoplasm. It carries out the reaction [protein]-L-glutamate 5-O-methyl ester + H2O = L-glutamyl-[protein] + methanol + H(+). The catalysed reaction is L-glutaminyl-[protein] + H2O = L-glutamyl-[protein] + NH4(+). Its function is as follows. Involved in chemotaxis. Part of a chemotaxis signal transduction system that modulates chemotaxis in response to various stimuli. Catalyzes the demethylation of specific methylglutamate residues introduced into the chemoreceptors (methyl-accepting chemotaxis proteins or MCP) by CheR. Also mediates the irreversible deamidation of specific glutamine residues to glutamic acid. The sequence is that of Protein-glutamate methylesterase/protein-glutamine glutaminase 1 from Syntrophomonas wolfei subsp. wolfei (strain DSM 2245B / Goettingen).